A 31-amino-acid chain; its full sequence is Cyclotide mech-6 (31 aa).

A cross-link (cyclopeptide (Gly-Asn)) is located at residues 1–31 (GVIPCGESCVFIPCISSVVGCTCKNKVCYRN). Intrachain disulfides connect Cys5/Cys21, Cys9/Cys23, and Cys14/Cys28.

This is a cyclic peptide. In terms of processing, contains 3 disulfide bonds.

Its function is as follows. Probably participates in a plant defense mechanism (Potential). Binds to and induces leakage in phospholipd membranes, particularly ones containing 1-palmitoyl-2-oleophosphatidylethanolamine (POPE). The chain is Cyclotide mech-6 from Melicytus chathamicus (Chatham Island mahoe).